Here is a 238-residue protein sequence, read N- to C-terminus: Large ribosomal subunit protein uL1 (238 aa).

This sequence belongs to the universal ribosomal protein uL1 family. Part of the 50S ribosomal subunit.

Binds directly to 23S rRNA. The L1 stalk is quite mobile in the ribosome, and is involved in E site tRNA release. Functionally, protein L1 is also a translational repressor protein, it controls the translation of the L11 operon by binding to its mRNA. The chain is Large ribosomal subunit protein uL1 from Frankia alni (strain DSM 45986 / CECT 9034 / ACN14a).